A 134-amino-acid polypeptide reads, in one-letter code: Arsenate reductase (134 aa).

Active-site nucleophile residues include Cys-11, Cys-83, and Cys-90. 2 disulfides stabilise this stretch: Cys-11–Cys-83 and Cys-83–Cys-90.

The protein belongs to the low molecular weight phosphotyrosine protein phosphatase family. Thioredoxin-coupled ArsC subfamily.

It localises to the cytoplasm. The enzyme catalyses arsenate + [thioredoxin]-dithiol + H(+) = arsenite + [thioredoxin]-disulfide + H2O. Catalyzes the reduction of arsenate [As(V)] to arsenite [As(III)]. The protein is Arsenate reductase of Bacillus cereus (strain ATCC 14579 / DSM 31 / CCUG 7414 / JCM 2152 / NBRC 15305 / NCIMB 9373 / NCTC 2599 / NRRL B-3711).